Reading from the N-terminus, the 95-residue chain is Large ribosomal subunit protein uL23 (95 aa).

The protein belongs to the universal ribosomal protein uL23 family. Part of the 50S ribosomal subunit. Contacts protein L29, and trigger factor when it is bound to the ribosome.

In terms of biological role, one of the early assembly proteins it binds 23S rRNA. One of the proteins that surrounds the polypeptide exit tunnel on the outside of the ribosome. Forms the main docking site for trigger factor binding to the ribosome. In Desulfotalea psychrophila (strain LSv54 / DSM 12343), this protein is Large ribosomal subunit protein uL23.